The following is a 413-amino-acid chain: MSAEIICVGTELLLGDIVNTNVQFLAKELANLGIPHYYQTVVGDNPTRLREVITIASKRASILLFTGGLGPTPDDLTTETIAQCFHSPLVEKAEIIEDIQDKFKARGRQMNENNRKQALIPKGATILPNPTGTAPGIIWEPIPNVTIMTFPGVPSEMKRMWSETAVPHLKSQGWGKEVIFSRMLRFRGIGESSLATKVNRFFNLTNPTVAPYASLGEVRLRISAKTASETEANAIIEPVAQEIIKIAGEDYFGQDDDTLGKVVGELLRQKQQTVSVAESCTGGGLGAMFTEIAGSSDYFWGGVIAYDNCVKMSLLEVSAEALDHHGAVSDIVAQQMALGIKKRLETDWGMSITGIAGPGGGTDIKPVGLVYIGIADPDGNVESVECTFGDRSRDIIRYLSSCTALDQLRRKLI.

The protein belongs to the CinA family.

In Crocosphaera subtropica (strain ATCC 51142 / BH68) (Cyanothece sp. (strain ATCC 51142)), this protein is CinA-like protein.